The following is a 987-amino-acid chain: SNF2 domain-containing protein ENL1 (987 aa).

Disordered regions lie at residues 1-172 (MASP…AYGG) and 224-245 (FGDYDDEDDIDQDAENGKENHA). Pro residues-rich tracts occupy residues 18–27 (TPPAPTPLAA) and 51–71 (NPNPNPNPNPKPPPPPPPQEP). A compositionally biased stretch (basic and acidic residues) spans 99–110 (DSIRDILDDLTT). Positions 141–156 (PSQSQLNDGTKPSSSF) are enriched in polar residues. The span at 226 to 237 (DYDDEDDIDQDA) shows a compositional bias: acidic residues. The Helicase ATP-binding domain maps to 292–466 (WVLHCRGTGG…WALFYFCCPE (175 aa)). ATP is bound at residue 305–312 (DDMGLGKT). The DEAH box signature appears at 417–420 (DEGH). The Helicase C-terminal domain occupies 645-801 (SLLQNLVSEG…TRYFSKRDIQ (157 aa)).

The protein belongs to the SNF2/RAD54 helicase family. Expressed in ovaries, roots, shoots and leaves.

It is found in the cytoplasm. It localises to the chromosome. Functionally, DNA helicase that acts as an essential component of the spindle assembly checkpoint. Plays an indispensable role in the development of seed endosperm. Is required to secure sister chromosome separation during endosperm syncytial mitosis, which involves extremely rapid free nuclear cycles. This chain is SNF2 domain-containing protein ENL1, found in Oryza sativa subsp. japonica (Rice).